The following is a 34-amino-acid chain: Cycloamanide E proprotein (34 aa).

Residues 1-10 (MSDINAARLP) constitute a propeptide that is removed on maturation. The cyclopeptide (Ser-Pro) cross-link spans 11–17 (SFFFPVP). A propeptide spanning residues 18 to 34 (CISDDIEMVLTRGESLC) is cleaved from the precursor.

This sequence belongs to the MSDIN fungal toxin family. In terms of processing, processed by the macrocyclase-peptidase enzyme POPB to yield a cyclic decapeptide. POPB first removes 10 residues from the N-terminus. Conformational trapping of the remaining peptide forces the enzyme to release this intermediate rather than proceed to macrocyclization. The enzyme rebinds the remaining peptide in a different conformation and catalyzes macrocyclization of the N-terminal 7 residues.

Functionally, cyclic heptapeptide that belongs to the MSDIN-like toxin family responsible for a large number of food poisoning cases and deaths. Cycloaminide E is structurally related to other cycloamanides that are non-toxic to mammals but show immunosuppressive activity. The protein is Cycloamanide E proprotein of Amanita phalloides (Death cap).